Reading from the N-terminus, the 293-residue chain is Signal recognition particle receptor FtsY (293 aa).

GTP is bound by residues Gly93–Thr100, Asp175–Arg179, and Thr239–Asp242.

Belongs to the GTP-binding SRP family. FtsY subfamily. In terms of assembly, part of the signal recognition particle protein translocation system, which is composed of SRP and FtsY. SRP is a ribonucleoprotein composed of Ffh and a 4.5S RNA molecule.

The protein localises to the cell inner membrane. It localises to the cytoplasm. The enzyme catalyses GTP + H2O = GDP + phosphate + H(+). In terms of biological role, involved in targeting and insertion of nascent membrane proteins into the cytoplasmic membrane. Acts as a receptor for the complex formed by the signal recognition particle (SRP) and the ribosome-nascent chain (RNC). Interaction with SRP-RNC leads to the transfer of the RNC complex to the Sec translocase for insertion into the membrane, the hydrolysis of GTP by both Ffh and FtsY, and the dissociation of the SRP-FtsY complex into the individual components. The polypeptide is Signal recognition particle receptor FtsY (Helicobacter pylori (strain J99 / ATCC 700824) (Campylobacter pylori J99)).